A 141-amino-acid polypeptide reads, in one-letter code: Galactose-6-phosphate isomerase subunit LacA (141 aa).

This sequence belongs to the LacAB/RpiB family. As to quaternary structure, heteromultimeric protein consisting of LacA and LacB.

It carries out the reaction aldehydo-D-galactose 6-phosphate = keto-D-tagatose 6-phosphate. Its pathway is carbohydrate metabolism; D-galactose 6-phosphate degradation; D-tagatose 6-phosphate from D-galactose 6-phosphate: step 1/1. The protein is Galactose-6-phosphate isomerase subunit LacA of Streptococcus pneumoniae (strain ATCC 700669 / Spain 23F-1).